The sequence spans 185 residues: Ribosome-recycling factor (185 aa).

This sequence belongs to the RRF family.

It is found in the cytoplasm. Responsible for the release of ribosomes from messenger RNA at the termination of protein biosynthesis. May increase the efficiency of translation by recycling ribosomes from one round of translation to another. This is Ribosome-recycling factor from Acidothermus cellulolyticus (strain ATCC 43068 / DSM 8971 / 11B).